The following is a 232-amino-acid chain: Phosphatidylserine decarboxylase proenzyme (232 aa).

Catalysis depends on S190, which acts as the Schiff-base intermediate with substrate; via pyruvic acid. Pyruvic acid (Ser); by autocatalysis is present on S190.

The protein belongs to the phosphatidylserine decarboxylase family. PSD-A subfamily. In terms of assembly, heterodimer of a large membrane-associated beta subunit and a small pyruvoyl-containing alpha subunit. Pyruvate serves as cofactor. Post-translationally, is synthesized initially as an inactive proenzyme. Formation of the active enzyme involves a self-maturation process in which the active site pyruvoyl group is generated from an internal serine residue via an autocatalytic post-translational modification. Two non-identical subunits are generated from the proenzyme in this reaction, and the pyruvate is formed at the N-terminus of the alpha chain, which is derived from the carboxyl end of the proenzyme. The post-translation cleavage follows an unusual pathway, termed non-hydrolytic serinolysis, in which the side chain hydroxyl group of the serine supplies its oxygen atom to form the C-terminus of the beta chain, while the remainder of the serine residue undergoes an oxidative deamination to produce ammonia and the pyruvoyl prosthetic group on the alpha chain.

It is found in the cell membrane. It carries out the reaction a 1,2-diacyl-sn-glycero-3-phospho-L-serine + H(+) = a 1,2-diacyl-sn-glycero-3-phosphoethanolamine + CO2. Its pathway is phospholipid metabolism; phosphatidylethanolamine biosynthesis; phosphatidylethanolamine from CDP-diacylglycerol: step 2/2. Its function is as follows. Catalyzes the formation of phosphatidylethanolamine (PtdEtn) from phosphatidylserine (PtdSer). This is Phosphatidylserine decarboxylase proenzyme from Brucella anthropi (strain ATCC 49188 / DSM 6882 / CCUG 24695 / JCM 21032 / LMG 3331 / NBRC 15819 / NCTC 12168 / Alc 37) (Ochrobactrum anthropi).